The sequence spans 300 residues: tRNA pseudouridine synthase B (300 aa).

The Nucleophile role is filled by Asp-38.

It belongs to the pseudouridine synthase TruB family. Type 1 subfamily.

It catalyses the reaction uridine(55) in tRNA = pseudouridine(55) in tRNA. Responsible for synthesis of pseudouridine from uracil-55 in the psi GC loop of transfer RNAs. This chain is tRNA pseudouridine synthase B, found in Dehalococcoides mccartyi (strain ATCC BAA-2266 / KCTC 15142 / 195) (Dehalococcoides ethenogenes (strain 195)).